The following is a 273-amino-acid chain: Large ribosomal subunit protein uL2 (273 aa).

Positions Val-228 to Lys-273 are disordered. Basic residues predominate over residues Lys-254–Lys-273.

This sequence belongs to the universal ribosomal protein uL2 family. As to quaternary structure, part of the 50S ribosomal subunit. Forms a bridge to the 30S subunit in the 70S ribosome.

One of the primary rRNA binding proteins. Required for association of the 30S and 50S subunits to form the 70S ribosome, for tRNA binding and peptide bond formation. It has been suggested to have peptidyltransferase activity; this is somewhat controversial. Makes several contacts with the 16S rRNA in the 70S ribosome. The chain is Large ribosomal subunit protein uL2 from Rickettsia peacockii (strain Rustic).